Consider the following 77-residue polypeptide: Translation initiation factor IF-1, chloroplastic (77 aa).

The S1-like domain maps to 1 to 71 (MKEQKWIHEG…TRGRIIYRLR (71 aa)).

The protein belongs to the IF-1 family. As to quaternary structure, component of the 30S ribosomal translation pre-initiation complex which assembles on the 30S ribosome in the order IF-2 and IF-3, IF-1 and N-formylmethionyl-tRNA(fMet); mRNA recruitment can occur at any time during PIC assembly.

It is found in the plastid. Its subcellular location is the chloroplast. In terms of biological role, one of the essential components for the initiation of protein synthesis. Stabilizes the binding of IF-2 and IF-3 on the 30S subunit to which N-formylmethionyl-tRNA(fMet) subsequently binds. Helps modulate mRNA selection, yielding the 30S pre-initiation complex (PIC). Upon addition of the 50S ribosomal subunit IF-1, IF-2 and IF-3 are released leaving the mature 70S translation initiation complex. This Hedera helix (English ivy) protein is Translation initiation factor IF-1, chloroplastic.